Reading from the N-terminus, the 483-residue chain is L-2-hydroxyglutarate dehydrogenase, mitochondrial (483 aa).

The N-terminal 67 residues, 1 to 67 (MKHKPETAAF…VDASKTIVRG (67 aa)), are a transit peptide targeting the mitochondrion.

This sequence belongs to the L2HGDH family. It depends on FAD as a cofactor.

It is found in the mitochondrion. The enzyme catalyses (S)-2-hydroxyglutarate + A = 2-oxoglutarate + AH2. In terms of biological role, catalyzes the oxidation of (S)-2-hydroxyglutarate to 2-oxoglutarate. Is specific for the (S) enantiomer and possesses very poor activity toward (R)-2-hydroxyglutarate. Has no activity toward related 2-hydroxy acids, such as glycolate, L-lactate or D-lactate. This chain is L-2-hydroxyglutarate dehydrogenase, mitochondrial, found in Arabidopsis thaliana (Mouse-ear cress).